A 160-amino-acid polypeptide reads, in one-letter code: Cell division protein SepF (160 aa).

Positions 18–30 are enriched in acidic residues; the sequence is AEGEDDFEDDVDT. The segment at 18–72 is disordered; that stretch reads AEGEDDFEDDVDTGETSFDSDHSVTPMPSSSASASTPSAPREQSNPFQGGRVSRI. Positions 45–57 are enriched in low complexity; sequence PSSSASASTPSAP.

It belongs to the SepF family. Homodimer. Interacts with FtsZ.

It localises to the cytoplasm. In terms of biological role, cell division protein that is part of the divisome complex and is recruited early to the Z-ring. Probably stimulates Z-ring formation, perhaps through the cross-linking of FtsZ protofilaments. Its function overlaps with FtsA. This chain is Cell division protein SepF, found in Bifidobacterium adolescentis (strain ATCC 15703 / DSM 20083 / NCTC 11814 / E194a).